The primary structure comprises 70 residues: MSNKMTGLVKWFDAGKGFGFISPADGSKDVFVHFSAIQGNDYKTLDEGQNVEFSIEQGQKGPSAVNVVAL.

A CSD domain is found at G7 to V67.

Its subcellular location is the cytoplasm. The sequence is that of Cold shock-like protein CspB (cspB) from Yersinia enterocolitica.